The chain runs to 134 residues: Large ribosomal subunit protein uL16c (134 aa).

Belongs to the universal ribosomal protein uL16 family. In terms of assembly, part of the 50S ribosomal subunit.

It is found in the plastid. The protein resides in the chloroplast. The chain is Large ribosomal subunit protein uL16c from Oltmannsiellopsis viridis (Marine flagellate).